Here is a 230-residue protein sequence, read N- to C-terminus: MADS-box transcription factor 50 (230 aa).

Residues 1 to 61 (MVRGKTQMKR…GKLYEFASAS (61 aa)) enclose the MADS-box domain. One can recognise a K-box domain in the interval 86-176 (IEQVKADADG…REKCKNQPPL (91 aa)). Positions 209-230 (GLPGRSRSSGGAAEDSQAMPHS) are disordered.

As to expression, expressed in mature leaves and at low levels in roots and young panicles.

The protein localises to the nucleus. In terms of biological role, probable transcription factor active in flowering time control. May control internode elongation and promote floral transition phase. May act upstream of the floral regulators MADS1, MADS14, MADS15 and MADS18 in the floral induction pathway. This is MADS-box transcription factor 50 (MADS50) from Oryza sativa subsp. japonica (Rice).